We begin with the raw amino-acid sequence, 218 residues long: DNA-directed RNA polymerases IV and V subunit 5B (218 aa).

It belongs to the archaeal Rpo5/eukaryotic RPB5 RNA polymerase subunit family. As to quaternary structure, component of the RNA polymerase IV and V complexes. Interacts with NRPD1. In terms of tissue distribution, expressed inleaves, flower buds, flowers and siliques.

It is found in the nucleus. In terms of biological role, DNA-dependent RNA polymerase catalyzes the transcription of DNA into RNA using the four ribonucleoside triphosphates as substrates. Component of RNA polymerases IV and V which mediate short-interfering RNAs (siRNA) accumulation and subsequent RNA-directed DNA methylation-dependent (RdDM) transcriptional gene silencing (TGS) of endogenous repeated sequences, including transposable elements. This Arabidopsis thaliana (Mouse-ear cress) protein is DNA-directed RNA polymerases IV and V subunit 5B (NRPD5B).